Reading from the N-terminus, the 274-residue chain is Rhamnulose-1-phosphate aldolase (274 aa).

Residue Glu117 is part of the active site. Zn(2+) contacts are provided by His141, His143, and His212.

This sequence belongs to the aldolase class II family. RhaD subfamily. As to quaternary structure, homotetramer. The cofactor is Zn(2+).

The protein localises to the cytoplasm. It carries out the reaction L-rhamnulose 1-phosphate = (S)-lactaldehyde + dihydroxyacetone phosphate. Its pathway is carbohydrate degradation; L-rhamnose degradation; glycerone phosphate from L-rhamnose: step 3/3. Catalyzes the reversible cleavage of L-rhamnulose-1-phosphate to dihydroxyacetone phosphate (DHAP) and L-lactaldehyde. This Escherichia coli (strain SE11) protein is Rhamnulose-1-phosphate aldolase.